The sequence spans 194 residues: dTTP/UTP pyrophosphatase (194 aa).

Aspartate 77 acts as the Proton acceptor in catalysis.

It belongs to the Maf family. YhdE subfamily. A divalent metal cation is required as a cofactor.

The protein localises to the cytoplasm. The catalysed reaction is dTTP + H2O = dTMP + diphosphate + H(+). It catalyses the reaction UTP + H2O = UMP + diphosphate + H(+). Nucleoside triphosphate pyrophosphatase that hydrolyzes dTTP and UTP. May have a dual role in cell division arrest and in preventing the incorporation of modified nucleotides into cellular nucleic acids. The chain is dTTP/UTP pyrophosphatase from Flavobacterium johnsoniae (strain ATCC 17061 / DSM 2064 / JCM 8514 / BCRC 14874 / CCUG 350202 / NBRC 14942 / NCIMB 11054 / UW101) (Cytophaga johnsonae).